A 377-amino-acid chain; its full sequence is 2-aminoethylphosphonate--pyruvate transaminase (377 aa).

Lysine 194 bears the N6-(pyridoxal phosphate)lysine mark.

It belongs to the class-V pyridoxal-phosphate-dependent aminotransferase family. PhnW subfamily. As to quaternary structure, homodimer. Requires pyridoxal 5'-phosphate as cofactor.

The enzyme catalyses (2-aminoethyl)phosphonate + pyruvate = phosphonoacetaldehyde + L-alanine. Involved in phosphonate degradation. The chain is 2-aminoethylphosphonate--pyruvate transaminase from Cupriavidus necator (strain ATCC 17699 / DSM 428 / KCTC 22496 / NCIMB 10442 / H16 / Stanier 337) (Ralstonia eutropha).